Consider the following 137-residue polypeptide: MRAVGVFLATCLVTIFVLPTWGNWAYPCCHVTQLRAQHLLALENISDIYLVSNQTCDGFSLASLNSPKNGSNQLVISRCANGLNVVSFFISILKRSSSALTSHLRELLTTLESLYGSFSVEDLFGANLNRYAWHRGG.

A signal peptide spans 1–25; it reads MRAVGVFLATCLVTIFVLPTWGNWA. The interaction with gH stretch occupies residues 23–128; it reads NWAYPCCHVT…SVEDLFGANL (106 aa). Intrachain disulfides connect Cys-28–Cys-56 and Cys-29–Cys-79.

This sequence belongs to the herpesviridae glycoprotein L family. As to quaternary structure, interacts with glycoprotein H (gH); this interaction is necessary for the correct processing and cell surface expression of gH. The heterodimer gH/gL seems to interact with gB trimers during fusion. The heterodimer gH/gL interacts with host EPHA2 to facilitate virus internalization and fusion.

The protein localises to the virion membrane. It is found in the host cell membrane. It localises to the host Golgi apparatus. The protein resides in the host trans-Golgi network. In terms of biological role, the heterodimer glycoprotein H-glycoprotein L is required for the fusion of viral and plasma membranes leading to virus entry into the host cell. Acts as a functional inhibitor of gH and maintains gH in an inhibited form. Upon binding to host integrins, gL dissociates from gH leading to activation of the viral fusion glycoproteins gB and gH. The heterodimer gH/gL targets also host EPHA2 to promote viral entry. This Homo sapiens (Human) protein is Envelope glycoprotein L.